Here is a 230-residue protein sequence, read N- to C-terminus: Nucleoside diphosphate kinase 2, chloroplastic (230 aa).

A chloroplast-targeting transit peptide spans 1 to 64; it reads MEAMAVFSGS…SYPKTFRTRS (64 aa). ATP contacts are provided by K90, F138, R166, T172, R183, and N193. The active-site Pros-phosphohistidine intermediate is the H196.

This sequence belongs to the NDK family. It depends on Mg(2+) as a cofactor.

Its subcellular location is the plastid. The protein localises to the chloroplast. It catalyses the reaction a 2'-deoxyribonucleoside 5'-diphosphate + ATP = a 2'-deoxyribonucleoside 5'-triphosphate + ADP. It carries out the reaction a ribonucleoside 5'-diphosphate + ATP = a ribonucleoside 5'-triphosphate + ADP. Major role in the synthesis of nucleoside triphosphates other than ATP. The ATP gamma phosphate is transferred to the NDP beta phosphate via a ping-pong mechanism, using a phosphorylated active-site intermediate. The protein is Nucleoside diphosphate kinase 2, chloroplastic (NDPK2) of Pisum sativum (Garden pea).